Reading from the N-terminus, the 361-residue chain is Nicotinate-nucleotide--dimethylbenzimidazole phosphoribosyltransferase (361 aa).

Glutamate 314 functions as the Proton acceptor in the catalytic mechanism.

The protein belongs to the CobT family.

It carries out the reaction 5,6-dimethylbenzimidazole + nicotinate beta-D-ribonucleotide = alpha-ribazole 5'-phosphate + nicotinate + H(+). The protein operates within nucleoside biosynthesis; alpha-ribazole biosynthesis; alpha-ribazole from 5,6-dimethylbenzimidazole: step 1/2. Its function is as follows. Catalyzes the synthesis of alpha-ribazole-5'-phosphate from nicotinate mononucleotide (NAMN) and 5,6-dimethylbenzimidazole (DMB). The sequence is that of Nicotinate-nucleotide--dimethylbenzimidazole phosphoribosyltransferase from Mycobacterium bovis (strain BCG / Pasteur 1173P2).